The primary structure comprises 241 residues: MSNEKMDTSPPSYDSHFTLETSMHRQLKDKRIILASGSPRRKQLFEQMGFPNVETCVSGFPEDLNKSMYITPWEYAADTSVQKAIAVYEKLAAEEDSPDIVVSADTILILDSEIMEKPNDPKHHLAMLKKLRNSKTPHKVFTAVSVIVPMEVPIHPGYVMKTHLEETQVKFDPSITDEFLEAYVRCGEGSDKAGGYAIQGHGALLIESIIGDFSNVVGLPIRATFKLMEEALEQGDADNYD.

S38 carries the phosphoserine modification. The active-site Proton acceptor is the D105.

The protein belongs to the Maf family. YhdE subfamily. It depends on a divalent metal cation as a cofactor.

The protein resides in the cytoplasm. It is found in the nucleus. It carries out the reaction dTTP + H2O = dTMP + diphosphate + H(+). The enzyme catalyses UTP + H2O = UMP + diphosphate + H(+). Its function is as follows. Nucleoside triphosphate pyrophosphatase that hydrolyzes dTTP and UTP. May have a dual role in cell division arrest and in preventing the incorporation of modified nucleotides into cellular nucleic acids. The sequence is that of dTTP/UTP pyrophosphatase from Schizosaccharomyces pombe (strain 972 / ATCC 24843) (Fission yeast).